The primary structure comprises 289 residues: RING-H2 finger protein ATL29 (289 aa).

A helical membrane pass occupies residues 25–45 (VILTVILLVFFFIGFFTLYFC). An RING-type; atypical zinc finger spans residues 110–152 (CAICLLEFDGDHVLRLLTTCYHVFHQECIDLWFESHRTCPVCR). The disordered stretch occupies residues 179–237 (TSDDEEDDHHRQQTTTQIDTWPSSGQTSSIKKEQNLPEKFSRSHSTGHSIVRNKPEEED). The segment covering 191-207 (QTTTQIDTWPSSGQTSS) has biased composition (polar residues). A compositionally biased stretch (basic and acidic residues) spans 208-219 (IKKEQNLPEKFS).

This sequence belongs to the RING-type zinc finger family. ATL subfamily.

It is found in the membrane. It catalyses the reaction S-ubiquitinyl-[E2 ubiquitin-conjugating enzyme]-L-cysteine + [acceptor protein]-L-lysine = [E2 ubiquitin-conjugating enzyme]-L-cysteine + N(6)-ubiquitinyl-[acceptor protein]-L-lysine.. Its pathway is protein modification; protein ubiquitination. In Arabidopsis thaliana (Mouse-ear cress), this protein is RING-H2 finger protein ATL29 (ATL29).